Here is a 285-residue protein sequence, read N- to C-terminus: Probable endonuclease 4 (285 aa).

9 residues coordinate Zn(2+): H69, H109, E145, D179, H182, H216, D229, H231, and E261.

This sequence belongs to the AP endonuclease 2 family. Zn(2+) is required as a cofactor.

It catalyses the reaction Endonucleolytic cleavage to 5'-phosphooligonucleotide end-products.. Endonuclease IV plays a role in DNA repair. It cleaves phosphodiester bonds at apurinic or apyrimidinic (AP) sites, generating a 3'-hydroxyl group and a 5'-terminal sugar phosphate. In Salmonella typhimurium (strain LT2 / SGSC1412 / ATCC 700720), this protein is Probable endonuclease 4.